Reading from the N-terminus, the 129-residue chain is Small ribosomal subunit protein uS8 (129 aa).

This sequence belongs to the universal ribosomal protein uS8 family. Part of the 30S ribosomal subunit.

Its function is as follows. One of the primary rRNA binding proteins, it binds directly to 16S rRNA central domain where it helps coordinate assembly of the platform of the 30S subunit. This chain is Small ribosomal subunit protein uS8, found in Thermoplasma acidophilum (strain ATCC 25905 / DSM 1728 / JCM 9062 / NBRC 15155 / AMRC-C165).